The primary structure comprises 493 residues: Glutamyl-tRNA(Gln) amidotransferase subunit A (493 aa).

Active-site charge relay system residues include Lys78 and Ser158. Catalysis depends on Ser182, which acts as the Acyl-ester intermediate.

The protein belongs to the amidase family. GatA subfamily. Heterotrimer of A, B and C subunits.

It catalyses the reaction L-glutamyl-tRNA(Gln) + L-glutamine + ATP + H2O = L-glutaminyl-tRNA(Gln) + L-glutamate + ADP + phosphate + H(+). Its function is as follows. Allows the formation of correctly charged Gln-tRNA(Gln) through the transamidation of misacylated Glu-tRNA(Gln) in organisms which lack glutaminyl-tRNA synthetase. The reaction takes place in the presence of glutamine and ATP through an activated gamma-phospho-Glu-tRNA(Gln). This is Glutamyl-tRNA(Gln) amidotransferase subunit A from Rickettsia felis (strain ATCC VR-1525 / URRWXCal2) (Rickettsia azadi).